Reading from the N-terminus, the 357-residue chain is Probable dual-specificity RNA methyltransferase RlmN (357 aa).

Glutamate 95 functions as the Proton acceptor in the catalytic mechanism. One can recognise a Radical SAM core domain in the interval 106–340 (NRDRHTVCVS…VSVREEKGTD (235 aa)). The cysteines at positions 113 and 345 are disulfide-linked. [4Fe-4S] cluster is bound by residues cysteine 120, cysteine 124, and cysteine 127. S-adenosyl-L-methionine contacts are provided by residues 172–173 (GE), serine 204, 227–229 (SLH), and asparagine 302. Cysteine 345 serves as the catalytic S-methylcysteine intermediate.

This sequence belongs to the radical SAM superfamily. RlmN family. Requires [4Fe-4S] cluster as cofactor.

It is found in the cytoplasm. It carries out the reaction adenosine(2503) in 23S rRNA + 2 reduced [2Fe-2S]-[ferredoxin] + 2 S-adenosyl-L-methionine = 2-methyladenosine(2503) in 23S rRNA + 5'-deoxyadenosine + L-methionine + 2 oxidized [2Fe-2S]-[ferredoxin] + S-adenosyl-L-homocysteine. It catalyses the reaction adenosine(37) in tRNA + 2 reduced [2Fe-2S]-[ferredoxin] + 2 S-adenosyl-L-methionine = 2-methyladenosine(37) in tRNA + 5'-deoxyadenosine + L-methionine + 2 oxidized [2Fe-2S]-[ferredoxin] + S-adenosyl-L-homocysteine. Specifically methylates position 2 of adenine 2503 in 23S rRNA and position 2 of adenine 37 in tRNAs. The chain is Probable dual-specificity RNA methyltransferase RlmN from Desulfitobacterium hafniense (strain DSM 10664 / DCB-2).